The sequence spans 365 residues: Putative agmatine deiminase (365 aa).

C356 (amidino-cysteine intermediate) is an active-site residue.

The protein belongs to the agmatine deiminase family.

The catalysed reaction is agmatine + H2O = N-carbamoylputrescine + NH4(+). The chain is Putative agmatine deiminase from Latilactobacillus sakei subsp. sakei (strain 23K) (Lactobacillus sakei subsp. sakei).